The primary structure comprises 316 residues: MGGSAPGQSPYQRLSQRMLDISGDRGVLKDVIREGAGELVTPDASVLVKYSGYLEHMDKPFDSNCFRKTPRLMKLGEDITLWGMELGLLSMRRGELARFLFKPTYAYGTLGCPPLIPPNTTVLFEIELLDFLDSAESDKFCALSAEQQDQFPLQKVLKVAATEREFGNYLFRQHRFYDAKVRYKRALLLLHRRSAPPEEQHLVEAAKLLVLLNLSFTYLKLERPTTALCYGEQALVIDQKNAKALFRCGQACLLMTEYQKARDFLVQAQKAQPFNHDINNELKKLASCYKDYTDKEKEMCHRMFAPCDDDSAVGEN.

The 90-residue stretch at 43–132 folds into the PPIase FKBP-type domain; it reads DASVLVKYSG…LFEIELLDFL (90 aa). 3 TPR repeats span residues 160–193, 208–241, and 242–275; these read AATEREFGNYLFRQHRFYDAKVRYKRALLLLHRR, LLVLLNLSFTYLKLERPTTALCYGEQALVIDQKN, and AKALFRCGQACLLMTEYQKARDFLVQAQKAQPFN.

It belongs to the FKBP6 family. As to quaternary structure, interacts with HSP72/HSPA2 and CLTC. Interacts with GAPDH; leading to inhibit GAPDH catalytic activity. Interacts (via TPR repeats) with HSP90. In terms of tissue distribution, specifically expressed in testis and sperm.

The protein localises to the cytoplasm. The protein resides in the cytosol. Its subcellular location is the nucleus. Functionally, co-chaperone required during spermatogenesis to repress transposable elements and prevent their mobilization, which is essential for the germline integrity. Acts via the piRNA metabolic process, which mediates the repression of transposable elements during meiosis by forming complexes composed of piRNAs and Piwi proteins and govern the methylation and subsequent repression of transposons. Acts as a co-chaperone via its interaction with HSP90 and is required for the piRNA amplification process, the secondary piRNA biogenesis. May be required together with HSP90 in removal of 16 nucleotide ping-pong by-products from Piwi complexes, possibly facilitating turnover of Piwi complexes. The polypeptide is Inactive peptidyl-prolyl cis-trans isomerase FKBP6 (FKBP6) (Equus caballus (Horse)).